We begin with the raw amino-acid sequence, 469 residues long: UDP-N-acetylmuramoylalanine--D-glutamate ligase (469 aa).

110-116 serves as a coordination point for ATP; sequence GTNGKST.

This sequence belongs to the MurCDEF family.

It is found in the cytoplasm. The enzyme catalyses UDP-N-acetyl-alpha-D-muramoyl-L-alanine + D-glutamate + ATP = UDP-N-acetyl-alpha-D-muramoyl-L-alanyl-D-glutamate + ADP + phosphate + H(+). Its pathway is cell wall biogenesis; peptidoglycan biosynthesis. In terms of biological role, cell wall formation. Catalyzes the addition of glutamate to the nucleotide precursor UDP-N-acetylmuramoyl-L-alanine (UMA). In Synechococcus sp. (strain JA-3-3Ab) (Cyanobacteria bacterium Yellowstone A-Prime), this protein is UDP-N-acetylmuramoylalanine--D-glutamate ligase.